Here is a 504-residue protein sequence, read N- to C-terminus: MALSISIYFLLIFLSHFPSSHAEPFIGVNYGQVADNLPPPSETVKLLQSTSIQKVRLYGADPAIIKALAGTGVGIVIGAANGDVPSLASDPNAATQWINSNVLPFYPASKIMLITVGNEILMSNDPNLVNQLLPAMQNVQKALEAVSLGGKIKVSTVNSMTVLGSSDPPSSGSFAAGYQTGLKGILQFLSDTGSPFAINPYPFFAYQSDPRPETLAFCLFEPNAGRVDSKTGIKYTNMFDAQVDAVHSALKSMGFEKVEIVVAETGWASRGDANEVGASVDNAKAYNGNLIAHLRSMVGTPLMPGKPVDTYIFALYDENLKPGPSSERAFGLFKTDLSMVYDVGLAKSSSSSQTPSGKVTSSGWCVPKKGATNEELQASLDWACGHGIDCGAIQPGGACFEPNNVVSHAAYAMNMYFQKSPKQPTDCDFSKTATVTSQNPSYNNCVYPGGGGGGGGGGGGSKAVMNKYVSSDKVEKKNGATEPKVSSSLSFLLIFLSLIFHVYM.

An N-terminal signal peptide occupies residues 1 to 22 (MALSISIYFLLIFLSHFPSSHA). The active-site Proton donor is E119. E264 acts as the Nucleophile in catalysis. C365 and C427 are joined by a disulfide.

It belongs to the glycosyl hydrolase 17 family. Post-translationally, contains two additional disulfide bonds.

The protein resides in the secreted. Its subcellular location is the cell wall. The catalysed reaction is Hydrolysis of (1-&gt;3)-beta-D-glucosidic linkages in (1-&gt;3)-beta-D-glucans.. This Arabidopsis thaliana (Mouse-ear cress) protein is Glucan endo-1,3-beta-glucosidase 7.